The sequence spans 146 residues: UPF0178 protein BCG9842_B2187 (146 aa).

Belongs to the UPF0178 family.

The chain is UPF0178 protein BCG9842_B2187 from Bacillus cereus (strain G9842).